A 500-amino-acid chain; its full sequence is Cysteine-rich secretory protein LCCL domain-containing 1 (500 aa).

Positions 1 to 23 (MKCTAREWLRVTTVLFMARAIPA) are cleaved as a signal peptide. An SCP domain is found at 66 to 206 (LDLHNKLRSQ…PKAVYLVCNY (141 aa)). Residues 254–280 (EETNEIERQQSQVHDTHVRTRSDDSSR) show a composition bias toward basic and acidic residues. Positions 254–281 (EETNEIERQQSQVHDTHVRTRSDDSSRN) are disordered. LCCL domains follow at residues 289–384 (MSQI…ANSF) and 390–492 (TVQA…PGGK). 4 disulfides stabilise this stretch: cysteine 295-cysteine 313, cysteine 317-cysteine 337, cysteine 396-cysteine 418, and cysteine 422-cysteine 445.

The protein belongs to the CRISP family.

It is found in the secreted. In Homo sapiens (Human), this protein is Cysteine-rich secretory protein LCCL domain-containing 1 (CRISPLD1).